We begin with the raw amino-acid sequence, 1093 residues long: Fused isobutyryl-CoA mutase (1093 aa).

A disordered region spans residues Met1–Gly20. The region spanning Lys26 to Arg156 is the B12-binding domain. His39 is an adenosylcob(III)alamin binding site. Residues Leu169–Ala417 form a GTPase chaperone MeaI region. Gly219–Ser224 contacts GTP. Residues Ser223, Ile248, Asp249, and Asp262 each coordinate Mg(2+). A GTP-binding site is contributed by Arg265. Mg(2+)-binding residues include Glu310 and Thr311. Asn357–Asp360 contributes to the GTP binding site. The tract at residues Arg418 to Pro579 is linker. Residues Phe587, Arg622, Arg728, Tyr772, Ser821, Arg856, and Lys861 each coordinate substrate. Residues Glu973 and Asn1092 each coordinate GTP.

This sequence belongs to the IcmF family. As to quaternary structure, homodimer. Adenosylcob(III)alamin serves as cofactor. The cofactor is Mg(2+).

It catalyses the reaction 2-methylpropanoyl-CoA = butanoyl-CoA. The enzyme catalyses 3-methylbutanoyl-CoA = 2,2-dimethylpropanoyl-CoA. The catalysed reaction is GTP + H2O = GDP + phosphate + H(+). Its activity is regulated as follows. Is prone to inactivation during catalytic turnover due to the occasional loss of the 5'-deoxyadenosine moiety and formation of the inactive cob(II)alamin cofactor in its active site. The GTPase activity of IcmF powers the ejection of the inactive cofactor and requires the presence of an acceptor protein, adenosyltransferase (ATR), for receiving it. ATR, in turn, catalyzes an adenosylation reaction converting cob(II)alamin in the presence of ATP and a reductant to the active AdoCbl cofactor. The repaired cofactor is then reloaded onto IcmF in a GTPase-gated step, regenerating active enzyme. The GTPase activity of IcmF is significantly decreased in the presence of excess of AdoCbl or cob(II)alamin and is higher in the apoenzyme state, indicating that the G-domain senses the presence and identity of the cofactor in the mutase active site. Functionally, catalyzes the reversible interconversion of isobutyryl-CoA and n-butyryl-CoA, and to a much lesser extent, of pivalyl-CoA and isovaleryl-CoA, using radical chemistry. Also exhibits GTPase activity, associated with its G-protein domain (MeaI) that functions as a chaperone that assists cofactor delivery and proper holo-enzyme assembly. The G-domain of IcmF also has a role in its cofactor repair. Does not display ATPase activity. This is Fused isobutyryl-CoA mutase from Cupriavidus metallidurans (strain ATCC 43123 / DSM 2839 / NBRC 102507 / CH34) (Ralstonia metallidurans).